A 339-amino-acid polypeptide reads, in one-letter code: Cathepsin L-like peptidase (339 aa).

The N-terminal stretch at 1–16 is a signal peptide; it reads MKILILLVAFVAAANA. Positions 17 to 121 are cleaved as a propeptide — activation peptide; it reads VSLYELVKEE…VTFIEPANVE (105 aa). The N-linked (GlcNAc...) asparagine glycan is linked to Asn-95. 3 cysteine pairs are disulfide-bonded: Cys-143–Cys-186, Cys-177–Cys-219, and Cys-278–Cys-328. Residue Cys-146 is part of the active site. Residues His-285 and Asn-306 contribute to the active site.

This sequence belongs to the peptidase C1 family. As to quaternary structure, dimer of a heavy and a light chain linked by disulfide bonds. Interacts with cystatin; the interaction results in inhibition of cathepsin L-like peptidase activity. In terms of tissue distribution, salivary gland. Midgut.

It carries out the reaction Specificity close to that of papain. As compared to cathepsin B, cathepsin L exhibits higher activity toward protein substrates, but has little activity on Z-Arg-Arg-NHMec, and no peptidyl-dipeptidase activity.. Its activity is regulated as follows. More active in the presence of a reducing agent DTT. Proteinase exhibiting preference for Leu, Val and Phe residues at the P2 position. This Aedes aegypti (Yellowfever mosquito) protein is Cathepsin L-like peptidase.